The primary structure comprises 300 residues: Energy-coupling factor transporter ATP-binding protein EcfA2 (300 aa).

The ABC transporter domain occupies 3-258; that stretch reads IKAKNIVKIY…NKFLIENKML (256 aa). ATP is bound at residue 40–47; sequence GQTGSGKT.

This sequence belongs to the ABC transporter superfamily. Energy-coupling factor EcfA family. As to quaternary structure, forms a stable energy-coupling factor (ECF) transporter complex composed of 2 membrane-embedded substrate-binding proteins (S component), 2 ATP-binding proteins (A component) and 2 transmembrane proteins (T component).

It localises to the cell membrane. ATP-binding (A) component of a common energy-coupling factor (ECF) ABC-transporter complex. Unlike classic ABC transporters this ECF transporter provides the energy necessary to transport a number of different substrates. This is Energy-coupling factor transporter ATP-binding protein EcfA2 from Mesomycoplasma hyopneumoniae (strain 7448) (Mycoplasma hyopneumoniae).